The sequence spans 749 residues: Tryptophan 2-monooxygenase (749 aa).

FMN is bound by residues S232, E252, K260, and R280. R280 serves as a coordination point for substrate.

Belongs to the tryptophan 2-monooxygenase family. FMN serves as cofactor.

It carries out the reaction L-tryptophan + O2 = indole-3-acetamide + CO2 + H2O. Its pathway is plant hormone metabolism; auxin biosynthesis. The sequence is that of Tryptophan 2-monooxygenase (aux1) from Rhizobium rhizogenes (Agrobacterium rhizogenes).